The chain runs to 455 residues: Epoxide hydrolase 1 (455 aa).

The helical; Signal-anchor for type III membrane protein transmembrane segment at 1–21 threads the bilayer; that stretch reads MLLELLLASVLGFVIYWFVSG. Topologically, residues 22-455 are cytoplasmic; that stretch reads DKEESLPLED…CKFVGLVERQ (434 aa). D226 (nucleophile) is an active-site residue. R295 is modified (dimethylated arginine). Y374 acts as the Proton donor in catalysis. The active-site Proton acceptor is the H431.

It belongs to the peptidase S33 family.

It localises to the microsome membrane. Its subcellular location is the endoplasmic reticulum membrane. It catalyses the reaction cis-stilbene oxide + H2O = (1R,2R)-hydrobenzoin. The enzyme catalyses 1-(4-methoxyphenyl)-N-methyl-N-[(3-methyloxetan-3-yl)methyl]methanamine + H2O = 2-{[(4-methoxybenzyl)(methyl)amino]methyl}-2-methylpropane-1,3-diol. The catalysed reaction is 8,9-epoxy-(5Z,11Z,14Z)-eicosatrienoate + H2O = 8,9-dihydroxy-(5Z,11Z,14Z)-eicosatrienoate. It carries out the reaction 11,12-epoxy-(5Z,8Z,14Z)-eicosatrienoate + H2O = 11,12-dihydroxy-(5Z,8Z,14Z)-eicosatrienoate. It catalyses the reaction 2-(5Z,8Z,11Z,14Z-eicosatetraenoyl)-glycerol + H2O = glycerol + (5Z,8Z,11Z,14Z)-eicosatetraenoate + H(+). With respect to regulation, inhibited by 10-hydroxystearamide and methoxy-arachidonyl fluorophosphate. Functionally, biotransformation enzyme that catalyzes the hydrolysis of arene and aliphatic epoxides to less reactive and more water soluble dihydrodiols by the trans addition of water. May play a role in the metabolism of endogenous lipids such as epoxide-containing fatty acids. Metabolizes the abundant endocannabinoid 2-arachidonoylglycerol (2-AG) to free arachidonic acid (AA) and glycerol. Binds 20(S)-hydroxycholesterol (20(S)-OHC). The polypeptide is Epoxide hydrolase 1 (EPHX1) (Oryctolagus cuniculus (Rabbit)).